A 1165-amino-acid chain; its full sequence is Chitin synthase 3 (1165 aa).

Topologically, residues 1–170 are cytoplasmic; sequence MTGLNGDDPD…ETNDTLSFWQ (170 aa). 2 disordered regions span residues 19-53 and 74-97; these read DEESLLRSRHSVGSGAPHRQGSLVRPERSRLNNPD and PSSTGVNPNATRRSGSLRSKGSVR. The span at 74–92 shows a compositional bias: polar residues; that stretch reads PSSTGVNPNATRRSGSLRS. A Glycyl lysine isopeptide (Lys-Gly) (interchain with G-Cter in ubiquitin) cross-link involves residue Lys136. A helical transmembrane segment spans residues 171-191; that stretch reads MYCYFITFWAPAPILAFCGMP. The Extracellular segment spans residues 192–340; sequence KKERQMAWRE…PNFTVENYAG (149 aa). N-linked (GlcNAc...) asparagine glycans are attached at residues Asn303 and Asn332. Residues 341 to 354 form a helical membrane-spanning segment; it reads WNCHTSKEDRDAFY. The Cytoplasmic portion of the chain corresponds to 355–452; that stretch reads GLKSKADVYF…SKTVGCIASD (98 aa). A helical transmembrane segment spans residues 453-473; it reads VVLYVSLVFILSVVIIKFIIA. Over 474–891 the chain is Extracellular; the sequence is CYFRWTVARK…EYYISHHQAK (418 aa). Ser537 bears the Phosphoserine mark. Phosphothreonine is present on Thr538. A helical membrane pass occupies residues 892 to 910; it reads AFESVFGSVTCLPGCFSMY. Topologically, residues 911-1029 are cytoplasmic; it reads RIKSPKGSDG…SMQFVIGIEL (119 aa). The helical transmembrane segment at 1030 to 1050 threads the bilayer; the sequence is IGTMVLPLAICFTIYVIIFAI. The Extracellular portion of the chain corresponds to 1051–1055; sequence VSKPT. Residues 1056–1076 traverse the membrane as a helical segment; that stretch reads PVITLVLLAIILGLPGLIVVI. Over 1077–1165 the chain is Cytoplasmic; it reads TATRWSYLWW…RKEESDSFVA (89 aa).

This sequence belongs to the chitin synthase family. Class IV subfamily. As to quaternary structure, homodimer. May form higher order oligomers. Seems to interact with BNI4 and SKT5 which link CHS3 to septins. Post-translationally, glycosylated. Palmitoylated by PFA4; required for proper export from the ER.

The protein resides in the cell membrane. Its subcellular location is the bud neck. It localises to the cytoplasmic vesicle membrane. It catalyses the reaction [(1-&gt;4)-N-acetyl-beta-D-glucosaminyl](n) + UDP-N-acetyl-alpha-D-glucosamine = [(1-&gt;4)-N-acetyl-beta-D-glucosaminyl](n+1) + UDP + H(+). In terms of biological role, polymerizes chitin, a structural polymer of the cell wall and septum, by transferring the sugar moiety of UDP-GlcNAc to the non-reducing end of the growing chitin polymer. Appears to be responsible for synthesis of the majority of the chitin found in the cell wall periphery. It is involved in the synthesis of the chitin ring that forms in the cell wall just before bud emergence. This ring remains at the base of the bud as the bud grows and ultimately forms part of the bud scar marking the division site on the mother cell. Also catalyzes the synthesis of chitin laid down during mating and spore cell-wall synthesis. This chain is Chitin synthase 3, found in Saccharomyces cerevisiae (strain ATCC 204508 / S288c) (Baker's yeast).